The chain runs to 262 residues: 2-oxo-tetronate isomerase (262 aa).

The Proton donor/acceptor role is filled by glutamate 143. Mg(2+) contacts are provided by glutamate 143, aspartate 178, glutamine 204, and glutamate 240. Catalysis depends on glutamate 240, which acts as the Proton donor/acceptor.

It belongs to the hyi family. OtnI subfamily.

It catalyses the reaction 2-dehydro-L-erythronate = 3-dehydro-L-erythronate. The enzyme catalyses 2-dehydro-D-erythronate = 3-dehydro-D-erythronate. Its function is as follows. Catalyzes the isomerization of 2-oxo-tetronate to 3-oxo-tetronate. This is 2-oxo-tetronate isomerase from Pectobacterium atrosepticum (strain SCRI 1043 / ATCC BAA-672) (Erwinia carotovora subsp. atroseptica).